The chain runs to 508 residues: PTS system mannitol-specific EIICB component (508 aa).

Topologically, residues 1 to 30 (MSQTETQENKGLGRKVQAFGSFLSSMIMPN) are cytoplasmic. The PTS EIIC type-2 domain occupies 19–351 (FGSFLSSMIM…LKFTKEPEED (333 aa)). The chain crosses the membrane as a helical span at residues 31-52 (IGAFIAWGFIAAIFIDGGWWPN). At 53–56 (KDLS) the chain is on the extracellular side. Residues 57 to 77 (ELAGPMISYLIPLLIAYSGGR) form a helical membrane-spanning segment. Residues 78–141 (LIHEMRGGII…QGFEMLFNNF (64 aa)) are Cytoplasmic-facing. Residues 142-163 (SAGILGFIMTIVGFKILAPIME) traverse the membrane as a helical segment. At 164 to 172 (FIMHILSLA) the chain is on the extracellular side. A helical membrane pass occupies residues 173-193 (VEALVHAHLLPLVSIIVEPAK). Topologically, residues 194–280 (IVFLNNAINH…VLMRPLLFIA (87 aa)) are cytoplasmic. Residues 281 to 300 (VILGGMTGVATYSLLDFGFK) traverse the membrane as a helical segment. At 301–320 (SPASPGSFIVYMLNAPKGEF) the chain is on the extracellular side. Residues 321-342 (LHMVLGVLLAAIVSFIVAALIL) traverse the membrane as a helical segment. Topologically, residues 343–508 (KFTKEPEEDL…RYDELLENLK (166 aa)) are cytoplasmic. Residues 355 to 400 (ATEKMEASKGKKSSVSSKLKGNEDNNATSTTASTSTSENNEEQSEE) are disordered. Residues 367 to 392 (SSVSSKLKGNEDNNATSTTASTSTSE) are compositionally biased toward low complexity. The PTS EIIB type-2 domain maps to 420–508 (NHVIFACDAG…RYDELLENLK (89 aa)). Catalysis depends on Cys426, which acts as the Phosphocysteine intermediate; for EIIB activity. The residue at position 426 (Cys426) is a Phosphocysteine; by EIIA.

As to quaternary structure, homodimer.

It localises to the cell membrane. The enzyme catalyses D-mannitol(out) + N(pros)-phospho-L-histidyl-[protein] = D-mannitol 1-phosphate(in) + L-histidyl-[protein]. Functionally, the phosphoenolpyruvate-dependent sugar phosphotransferase system (sugar PTS), a major carbohydrate active transport system, catalyzes the phosphorylation of incoming sugar substrates concomitantly with their translocation across the cell membrane. The enzyme II CmtAB PTS system is involved in D-mannitol transport. The polypeptide is PTS system mannitol-specific EIICB component (mtlA) (Staphylococcus saprophyticus subsp. saprophyticus (strain ATCC 15305 / DSM 20229 / NCIMB 8711 / NCTC 7292 / S-41)).